Reading from the N-terminus, the 460-residue chain is MTVPYLNSNRNVASYLQSNSSQEKTLKERFSEIYPIHAQDVRQFVKEHGKTKISDVLLEQVYGGMRGIPGSVWEGSVLDPEDGIRFRGRTIADIQKDLPKAKGSSQPLPEALFWLLLTGEVPTQAQVENLSADLMSRSELPSHVVQLLDNLPKDLHPMAQFSIAVTALESESKFAKAYAQGISKQDYWSYTFEDSLDLLGKLPVIAAKIYRNVFKDGKMGEVDPNADYAKNLVNLIGSKDEDFVDLMRLYLTIHSDHEGGNVSAHTSHLVGSALSSPYLSLASGLNGLAGPLHGRANQEVLEWLFALKEEVNDDYSKDTIEKYLWDTLNSGRVIPGYGHAVLRKTDPRYMAQRKFAMDHFPDYELFKLVSSIYEVAPGVLTEHGKTKNPWPNVDAHSGVLLQYYGLKESSFYTVLFGVSRAFGILAQLITDRAIGASIERPKSYSTEKYKELVKNIESKL.

At Ser21 the chain carries Phosphoserine. Glycyl lysine isopeptide (Lys-Gly) (interchain with G-Cter in ubiquitin) cross-links involve residues Lys218 and Lys239. Residues His293 and His339 contribute to the active site. Glycyl lysine isopeptide (Lys-Gly) (interchain with G-Cter in ubiquitin) cross-links involve residues Lys354 and Lys385. Asp394 is an active-site residue. The short motif at Ser458–Leu460 is the C-terminal peroxisome targeting signal (PTS1) element.

Belongs to the citrate synthase family. Interacts with F-box protein UCC1. Post-translationally, ubiquitinated by the E3 ubiquitin-protein ligase complex SCF(UCC1), which leads to its degradation by the proteasome. Ubiquitination is prevented by oxaloacetate, suggesting the existence of an oxaloacetate-dependent positive feedback loop that stabilizes CIT2.

It localises to the cytoplasm. It is found in the peroxisome. The enzyme catalyses oxaloacetate + acetyl-CoA + H2O = citrate + CoA + H(+). It functions in the pathway carbohydrate metabolism; tricarboxylic acid cycle; isocitrate from oxaloacetate: step 1/2. In terms of biological role, peroxisomal citrate synthase involved in the citrate homeostasis. Catalyzes the condensation of acetyl coenzyme A and oxaloacetate to form citrate. Citrate synthase is the rate-limiting enzyme of the tricarboxylic acid (TCA) cycle. The protein is Citrate synthase, peroxisomal of Saccharomyces cerevisiae (strain ATCC 204508 / S288c) (Baker's yeast).